The sequence spans 156 residues: ATP synthase subunit b (156 aa).

A helical transmembrane segment spans residues methionine 1–valine 21.

Belongs to the ATPase B chain family. F-type ATPases have 2 components, F(1) - the catalytic core - and F(0) - the membrane proton channel. F(1) has five subunits: alpha(3), beta(3), gamma(1), delta(1), epsilon(1). F(0) has three main subunits: a(1), b(2) and c(10-14). The alpha and beta chains form an alternating ring which encloses part of the gamma chain. F(1) is attached to F(0) by a central stalk formed by the gamma and epsilon chains, while a peripheral stalk is formed by the delta and b chains.

The protein resides in the cell inner membrane. Its function is as follows. F(1)F(0) ATP synthase produces ATP from ADP in the presence of a proton or sodium gradient. F-type ATPases consist of two structural domains, F(1) containing the extramembraneous catalytic core and F(0) containing the membrane proton channel, linked together by a central stalk and a peripheral stalk. During catalysis, ATP synthesis in the catalytic domain of F(1) is coupled via a rotary mechanism of the central stalk subunits to proton translocation. Component of the F(0) channel, it forms part of the peripheral stalk, linking F(1) to F(0). The chain is ATP synthase subunit b from Nitrosococcus oceani (strain ATCC 19707 / BCRC 17464 / JCM 30415 / NCIMB 11848 / C-107).